A 1009-amino-acid polypeptide reads, in one-letter code: Type VII secretion system accessory factor EsaA (1009 aa).

Residues 7 to 27 (IYALIVTLIIIIAIVSMIFFV) form a helical membrane-spanning segment. Residues 680–697 (TFAEEPQEPKIDKGKNDE) are compositionally biased toward basic and acidic residues. The disordered stretch occupies residues 680 to 707 (TFAEEPQEPKIDKGKNDEFNTMSSNLDK). 5 consecutive transmembrane segments (helical) span residues 822 to 842 (ISPT…AYIF), 869 to 889 (VITS…VGLI), 903 to 923 (KFIL…TYLL), 928 to 948 (SIGM…MNNL), and 979 to 999 (IGLV…LNMF).

It belongs to the EsaA family. In terms of assembly, homodimer. Interacts with EssB.

The protein localises to the cell membrane. Component of the type VII secretion system (Ess). Provides together with EssB and other components such as EssC and EssE a secretion plateform accross the cytoplasmic membrane in the host. The chain is Type VII secretion system accessory factor EsaA from Staphylococcus aureus (strain USA300).